Here is a 443-residue protein sequence, read N- to C-terminus: Thymidine phosphorylase (443 aa).

This sequence belongs to the thymidine/pyrimidine-nucleoside phosphorylase family. In terms of assembly, homodimer.

The enzyme catalyses thymidine + phosphate = 2-deoxy-alpha-D-ribose 1-phosphate + thymine. Its pathway is pyrimidine metabolism; dTMP biosynthesis via salvage pathway; dTMP from thymine: step 1/2. Functionally, the enzymes which catalyze the reversible phosphorolysis of pyrimidine nucleosides are involved in the degradation of these compounds and in their utilization as carbon and energy sources, or in the rescue of pyrimidine bases for nucleotide synthesis. In Aliivibrio fischeri (strain ATCC 700601 / ES114) (Vibrio fischeri), this protein is Thymidine phosphorylase.